The sequence spans 91 residues: MAKGQSLQDPYLNALRRERIPVSIYLVNGIKLQGQIESFDQFVILLKNTVNQMVYKHAISTVVPARSVSHHNNNHHTAPTEAVENVETQAE.

The Sm domain maps to 9–68 (DPYLNALRRERIPVSIYLVNGIKLQGQIESFDQFVILLKNTVNQMVYKHAISTVVPARSV). The disordered stretch occupies residues 69 to 91 (SHHNNNHHTAPTEAVENVETQAE).

This sequence belongs to the Hfq family. As to quaternary structure, homohexamer.

In terms of biological role, RNA chaperone that binds small regulatory RNA (sRNAs) and mRNAs to facilitate mRNA translational regulation in response to envelope stress, environmental stress and changes in metabolite concentrations. Also binds with high specificity to tRNAs. The chain is RNA-binding protein Hfq from Haemophilus influenzae (strain ATCC 51907 / DSM 11121 / KW20 / Rd).